The primary structure comprises 439 residues: Agnestins biosynthesis cluster transcriptional coactivator AgnL9 (439 aa).

Residues 79 to 149 form the HTH iclR-type domain; that stretch reads MTIQTQLLAC…EPGHITHSAL (71 aa). Residues 109 to 128 constitute a DNA-binding region (H-T-H motif); that stretch reads MKDVSELIDVPENQLGRIVR.

It is found in the nucleus. Its function is as follows. Transcriptional coactivator; part of the gene cluster that mediates the biosynthesis of agnestins, dihydroxy-xanthone metabolites. This is Agnestins biosynthesis cluster transcriptional coactivator AgnL9 from Paecilomyces divaricatus (Penicillium divaricatum).